Here is a 443-residue protein sequence, read N- to C-terminus: MECLRSLPCLLPRAMRLPRRTLCALALDLTSVAPPVAASGRRANLIGRSRAAQLCEPGRLRVAGEVHRFRTSDVSQATLASVAPVFTVTKFDKQGNVTSFERKKTELYQELGLQARDLRFQHVMSITVRNNRIIMRMEYLKAVITPECLLILDYRNLNLEQWLFRELPSQLSGEGQLVTYPLPFEFRAIEALLQYWINTLQGKLSVLQPLILETLDALVDPKHSSVDKSKLHILLQNGKSLSELETDIKIFKESILEILDEEELLEELCVSKWSDPQVFEKSSAGIDHAEEMELLLENYYRLADDLSNAARELRVLIDDSQSIIFINLGSHRNVMMRLNLQLTMGTFSLSLFGLMGVAFGMNLESSLEEDHRIFWLITGIMFMGSGLIWRRLLSFLGRQLEAPLPPMMASLPKKTLLADRSMELKNSLRLDGLGSGRSILTNR.

A mitochondrion-targeting transit peptide spans 1 to 49 (MECLRSLPCLLPRAMRLPRRTLCALALDLTSVAPPVAASGRRANLIGRS). The Mitochondrial matrix portion of the chain corresponds to 50–339 (RAAQLCEPGR…SHRNVMMRLN (290 aa)). Positions 243, 246, 247, 312, and 329 each coordinate Mg(2+). Residues 340–359 (LQLTMGTFSLSLFGLMGVAF) form a helical membrane-spanning segment. Mg(2+) contacts are provided by Gly-360 and Asn-362. The GMN motif signature appears at 360–362 (GMN). Over 360-370 (GMNLESSLEED) the chain is Mitochondrial intermembrane. The helical transmembrane segment at 371 to 401 (HRIFWLITGIMFMGSGLIWRRLLSFLGRQLE) threads the bilayer. Topologically, residues 402 to 443 (APLPPMMASLPKKTLLADRSMELKNSLRLDGLGSGRSILTNR) are mitochondrial matrix.

Belongs to the CorA metal ion transporter (MIT) (TC 1.A.35) family. As to quaternary structure, homopentamer.

The protein localises to the mitochondrion inner membrane. May be regulated by calcium ions. Functionally, magnesium transporter that mediates the influx of magnesium into the mitochondrial matrix and regulates magnesium metabolism. Also permeable to calcium, sodium and potassium ions. Required for normal expression of the mitochondrial respiratory complex I subunits. May play a role in maintaining the inner mitochondrial membrane potential. The chain is Magnesium transporter MRS2 homolog, mitochondrial (MRS2) from Pongo abelii (Sumatran orangutan).